We begin with the raw amino-acid sequence, 177 residues long: Nicotinamide-nucleotide adenylyltransferase (177 aa).

This sequence belongs to the archaeal NMN adenylyltransferase family.

It is found in the cytoplasm. It catalyses the reaction beta-nicotinamide D-ribonucleotide + ATP + H(+) = diphosphate + NAD(+). The protein operates within cofactor biosynthesis; NAD(+) biosynthesis; NAD(+) from nicotinamide D-ribonucleotide: step 1/1. This chain is Nicotinamide-nucleotide adenylyltransferase, found in Halobacterium salinarum (strain ATCC 29341 / DSM 671 / R1).